A 736-amino-acid chain; its full sequence is Zinc finger MYND domain-containing protein 15 (736 aa).

Disordered stretches follow at residues serine 70–proline 94 and leucine 109–glutamate 192. Over residues glutamate 110–glutamate 123 the composition is skewed to acidic residues. 2 stretches are compositionally biased toward basic and acidic residues: residues histidine 124–proline 135 and alanine 165–arginine 185. Zn(2+)-binding residues include cysteine 307, cysteine 310, cysteine 322, cysteine 325, cysteine 331, cysteine 335, histidine 349, and cysteine 353. The MYND-type zinc-finger motif lies at cysteine 307–cysteine 353. Disordered stretches follow at residues aspartate 556–arginine 583 and glycine 696–arginine 736. Residues glycine 704–proline 718 are compositionally biased toward pro residues. A compositionally biased stretch (basic residues) spans alanine 719–arginine 736.

Interacts with HDAC1, HDAC3, HDAC6 and, to a lesser extent, with HDAC7. In terms of tissue distribution, testis-specific. Expressed in pachytene spermatocytes and all developing spermatids, but not in Sertoli, nor Leydig cells (at protein level).

The protein localises to the nucleus. The protein resides in the cytoplasm. Its function is as follows. Acts as a transcriptional repressor through interaction with histone deacetylases (HDACs). May regulate haploid genes important for spermiogenesis. The sequence is that of Zinc finger MYND domain-containing protein 15 (Zmynd15) from Mus musculus (Mouse).